The primary structure comprises 433 residues: Adenylosuccinate synthetase (433 aa).

GTP-binding positions include 13–19 (GDEGKGK) and 41–43 (GHT). The active-site Proton acceptor is the Asp14. Asp14 and Gly41 together coordinate Mg(2+). Residues 14–17 (DEGK), 39–42 (NAGH), Thr130, Arg144, Gln225, Thr240, and Arg304 each bind IMP. The Proton donor role is filled by His42. 300-306 (STTGRKR) serves as a coordination point for substrate. GTP contacts are provided by residues Arg306, 332–334 (KLD), and 414–416 (STG).

It belongs to the adenylosuccinate synthetase family. As to quaternary structure, homodimer. Mg(2+) serves as cofactor.

Its subcellular location is the cytoplasm. The catalysed reaction is IMP + L-aspartate + GTP = N(6)-(1,2-dicarboxyethyl)-AMP + GDP + phosphate + 2 H(+). Its pathway is purine metabolism; AMP biosynthesis via de novo pathway; AMP from IMP: step 1/2. Its function is as follows. Plays an important role in the de novo pathway of purine nucleotide biosynthesis. Catalyzes the first committed step in the biosynthesis of AMP from IMP. In Buchnera aphidicola subsp. Acyrthosiphon pisum (strain APS) (Acyrthosiphon pisum symbiotic bacterium), this protein is Adenylosuccinate synthetase.